Reading from the N-terminus, the 498-residue chain is MQGTKIRLLAGGLLMMATAGYVQADALQPDPAWQQGTLSNGLQWQVLTTPQRPSDRVEIRLLVNTGSLAESTQQSGYSHAIPRIALTQSGGLDAAQARSLWQQGIDPKRPMPPVIVSYDTTLFNLSLPNNRNDLLKEALSYLANATGKLTITPETINHALQSQDMVATWPADTKEGWWRYRLKGSTLLGHDPADPLKQPVEAEKIKDFYQKWYTPDAMTLLVVGNVDARSVVDQINKTFGELKGKRETPAPVPTLSPLRAEAVSIMTDAVRQDRLSIMWDTPWQPIRESAALLRYWRADLAREALFWHVQQALSASNSKDIGLGFDCRVLYLRAQCAINIESPNDKLNSNLNLVARELAKVRDKGLPEEEFNALVAQKKLELQKLFAAYARADTDILMGQRMRSLQNQVVDIAPEQYQKLRQDFLNSLTVEMLNQDLRQQLSNDMALILLQPKGEPEFNMKALQAVWDQIMAPSTAAATTSVATDDVHPEVTDIPPAQ.

A signal peptide spans 1 to 24 (MQGTKIRLLAGGLLMMATAGYVQA).

Belongs to the peptidase M16 family.

It localises to the periplasm. This is Protein YhjJ (yhjJ) from Escherichia coli (strain K12).